A 205-amino-acid polypeptide reads, in one-letter code: Guanylate kinase (205 aa).

The region spanning 17-195 is the Guanylate kinase-like domain; sequence PRLTVLSGPS…VSRELLALML (179 aa). 24–31 serves as a coordination point for ATP; sequence GPSGVGKS.

It belongs to the guanylate kinase family.

It is found in the cytoplasm. It catalyses the reaction GMP + ATP = GDP + ADP. Its function is as follows. Essential for recycling GMP and indirectly, cGMP. The chain is Guanylate kinase from Streptomyces kasugaensis.